The primary structure comprises 306 residues: Large ribosomal subunit protein mL45 (306 aa).

It belongs to the mitochondrion-specific ribosomal protein mL45 family. In terms of assembly, component of the mitochondrial ribosome large subunit (39S) which comprises a 16S rRNA and about 50 distinct proteins.

It is found in the mitochondrion. In terms of biological role, component of the mitochondrial large ribosomal subunit (mt-LSU). Within the mitochondrial ribosomes, required to direct the nascent polypeptide toward the tunnel exit and position the exit at a distance from the membrane surface. The protein is Large ribosomal subunit protein mL45 (MRPL45) of Bos taurus (Bovine).